Consider the following 300-residue polypeptide: Actin-related protein 2/3 complex subunit 2 (300 aa).

Lys275 and Lys295 each carry N6-acetyllysine.

It belongs to the ARPC2 family. Component of the Arp2/3 complex composed of ACTR2/ARP2, ACTR3/ARP3, ARPC1B/p41-ARC, ARPC2/p34-ARC, ARPC3/p21-ARC, ARPC4/p20-ARC and ARPC5/p16-ARC. Interacts with SHANK3; the interaction probably mediates the association of SHANK3 with the Arp2/3 complex.

The protein resides in the cytoplasm. It localises to the cytoskeleton. The protein localises to the cell projection. Its subcellular location is the synapse. It is found in the synaptosome. The protein resides in the nucleus. Actin-binding component of the Arp2/3 complex, a multiprotein complex that mediates actin polymerization upon stimulation by nucleation-promoting factor (NPF). The Arp2/3 complex mediates the formation of branched actin networks in the cytoplasm, providing the force for cell motility. Seems to contact the mother actin filament. In addition to its role in the cytoplasmic cytoskeleton, the Arp2/3 complex also promotes actin polymerization in the nucleus, thereby regulating gene transcription and repair of damaged DNA. The Arp2/3 complex promotes homologous recombination (HR) repair in response to DNA damage by promoting nuclear actin polymerization, leading to drive motility of double-strand breaks (DSBs). This chain is Actin-related protein 2/3 complex subunit 2, found in Rattus norvegicus (Rat).